A 224-amino-acid chain; its full sequence is Deoxyguanosine kinase (224 aa).

8 to 16 provides a ligand contact to ATP; it reads GPIGAGKSS. Substrate contacts are provided by glutamate 32, tyrosine 44, and glutamine 55. The active-site Proton acceptor is aspartate 78. The substrate site is built by arginine 79, aspartate 84, and glutamate 149.

This sequence belongs to the DCK/DGK family. Heterodimer of a deoxyadenosine (DAK) and a deoxyguanosine kinase (DGK).

It catalyses the reaction 2'-deoxyguanosine + ATP = dGMP + ADP + H(+). DGK/DAK plays an essential role in generating the deoxyribonucleotide precursors, dGTP and dATP, for DNA metabolism. The sequence is that of Deoxyguanosine kinase from Lactobacillus johnsonii (strain CNCM I-12250 / La1 / NCC 533).